A 176-amino-acid polypeptide reads, in one-letter code: Peptide methionine sulfoxide reductase MsrA (176 aa).

The active site involves C10.

Belongs to the MsrA Met sulfoxide reductase family.

It catalyses the reaction L-methionyl-[protein] + [thioredoxin]-disulfide + H2O = L-methionyl-(S)-S-oxide-[protein] + [thioredoxin]-dithiol. The enzyme catalyses [thioredoxin]-disulfide + L-methionine + H2O = L-methionine (S)-S-oxide + [thioredoxin]-dithiol. Its function is as follows. Has an important function as a repair enzyme for proteins that have been inactivated by oxidation. Catalyzes the reversible oxidation-reduction of methionine sulfoxide in proteins to methionine. This Chromobacterium violaceum (strain ATCC 12472 / DSM 30191 / JCM 1249 / CCUG 213 / NBRC 12614 / NCIMB 9131 / NCTC 9757 / MK) protein is Peptide methionine sulfoxide reductase MsrA.